The sequence spans 361 residues: Phosphate acyltransferase (361 aa).

It belongs to the PlsX family. In terms of assembly, homodimer. Probably interacts with PlsY.

Its subcellular location is the cytoplasm. It catalyses the reaction a fatty acyl-[ACP] + phosphate = an acyl phosphate + holo-[ACP]. Its pathway is lipid metabolism; phospholipid metabolism. Functionally, catalyzes the reversible formation of acyl-phosphate (acyl-PO(4)) from acyl-[acyl-carrier-protein] (acyl-ACP). This enzyme utilizes acyl-ACP as fatty acyl donor, but not acyl-CoA. This Parvibaculum lavamentivorans (strain DS-1 / DSM 13023 / NCIMB 13966) protein is Phosphate acyltransferase.